A 284-amino-acid polypeptide reads, in one-letter code: tRNA (guanine-N(7)-)-methyltransferase (284 aa).

Residues G102, 125-126 (EI), 160-161 (NT), and C180 contribute to the S-adenosyl-L-methionine site. D183 is a catalytic residue. 258–260 (TEE) is an S-adenosyl-L-methionine binding site.

The protein belongs to the class I-like SAM-binding methyltransferase superfamily. TrmB family. Forms a complex with TRM82.

Its subcellular location is the nucleus. It carries out the reaction guanosine(46) in tRNA + S-adenosyl-L-methionine = N(7)-methylguanosine(46) in tRNA + S-adenosyl-L-homocysteine. Its pathway is tRNA modification; N(7)-methylguanine-tRNA biosynthesis. Catalyzes the formation of N(7)-methylguanine at position 46 (m7G46) in tRNA. The chain is tRNA (guanine-N(7)-)-methyltransferase from Podospora anserina (strain S / ATCC MYA-4624 / DSM 980 / FGSC 10383) (Pleurage anserina).